The chain runs to 247 residues: UPF0280 protein MMP1236 (247 aa).

It belongs to the UPF0280 family.

This Methanococcus maripaludis (strain DSM 14266 / JCM 13030 / NBRC 101832 / S2 / LL) protein is UPF0280 protein MMP1236.